We begin with the raw amino-acid sequence, 122 residues long: U19-hexatoxin-Hi1a (122 aa).

The signal sequence occupies residues 1–18 (MNTMIGFIVLLVSATVLG). The propeptide occupies 19-80 (DPELDALRKE…YENSNFREKR (62 aa)). Disulfide bonds link cysteine 81–cysteine 96, cysteine 88–cysteine 101, and cysteine 95–cysteine 116.

As to expression, expressed by the venom gland.

Its subcellular location is the secreted. Probable ion channel inhibitor. In Hadronyche infensa (Fraser island funnel-web spider), this protein is U19-hexatoxin-Hi1a.